Here is a 95-residue protein sequence, read N- to C-terminus: Small ribosomal subunit protein bS6 (95 aa).

It belongs to the bacterial ribosomal protein bS6 family.

Binds together with bS18 to 16S ribosomal RNA. This Clostridium kluyveri (strain NBRC 12016) protein is Small ribosomal subunit protein bS6.